Reading from the N-terminus, the 173-residue chain is DNA-directed RNA polymerase subunit delta (173 aa).

One can recognise an HTH HARE-type domain in the interval 14 to 81 (MALVEIAHEL…SDQTWGLRSW (68 aa)). The tract at residues 110 to 173 (LDLDEFEEID…DYDDEEEEIK (64 aa)) is disordered.

This sequence belongs to the RpoE family. In terms of assembly, RNAP is composed of a core of 2 alpha, a beta and a beta' subunit. The core is associated with a delta subunit, and at least one of epsilon or omega. When a sigma factor is associated with the core the holoenzyme is formed, which can initiate transcription.

Participates in both the initiation and recycling phases of transcription. In the presence of the delta subunit, RNAP displays an increased specificity of transcription, a decreased affinity for nucleic acids, and an increased efficiency of RNA synthesis because of enhanced recycling. May function in sigma factor switching. It displaces RNA bound to RNA polymerase in a binary complex. The chain is DNA-directed RNA polymerase subunit delta from Bacillus subtilis (strain 168).